A 131-amino-acid polypeptide reads, in one-letter code: uncharacterized protein (131 aa).

Residues 99-131 (NAIQEEEIDMEQQEEKEEKPREKGKKKSVEEEF) are disordered. The segment covering 102–113 (QEEEIDMEQQEE) has biased composition (acidic residues). Residues 114 to 131 (KEEKPREKGKKKSVEEEF) show a composition bias toward basic and acidic residues.

This is an uncharacterized protein from Sulfolobus islandicus rod-shaped virus 1 (SIRV-1).